The primary structure comprises 127 residues: MRPVTSFLNRKKAPKNNGDKAEQAAEAFLRKQGLRFVERNFFCRIGEIDLIFLDQNTYVFVEVRFRANNTHGNAAESLGQSKLKKVRNSAALWLQKNNKVNNSSRFDAILFDEKIDSQHLTWLKAVF.

Belongs to the UPF0102 family.

The protein is UPF0102 protein Mmwyl1_2395 of Marinomonas sp. (strain MWYL1).